The sequence spans 346 residues: MYQLARSLLFKLDPEVSHELSLDLLAASSRLGLNRFLGGLPSTKPVDVMGLRFPNAVGLAAGLDKNADAFEALGALGFGFVEVGTVTPKGQAGNPKPRLFRLPEHEAIINRMGFNNKGVDHLVSRIKSHRYPGVLGVNIGKNLTTSVEDAAADYLACLESVIPYADYITANISSPNTPGLRSLQFGESLAQLIAPLVAARDRYEAAYGKRVPLAVKIAPDMTDDEIKMVADTLVDQGVDGIIATNTTLSREAVLGHQFEKEAGGLSGMPVRDASTHVVKVLAEHLKDTLPIIGVGGISSGADAVEKLQAGARLVQIYSGFIYHGPELIKEAVASTDAYYRELDLGI.

Residues 61-65 (AGLDK) and threonine 85 each bind FMN. Lysine 65 contributes to the substrate binding site. 110–114 (NRMGF) provides a ligand contact to substrate. The FMN site is built by asparagine 138 and asparagine 171. Asparagine 171 contacts substrate. Serine 174 (nucleophile) is an active-site residue. Asparagine 176 provides a ligand contact to substrate. Residues lysine 216 and threonine 244 each coordinate FMN. 245–246 (NT) provides a ligand contact to substrate. Residues glycine 267, glycine 296, and 317–318 (YS) contribute to the FMN site.

Belongs to the dihydroorotate dehydrogenase family. Type 2 subfamily. As to quaternary structure, monomer. Requires FMN as cofactor.

The protein resides in the cell membrane. The catalysed reaction is (S)-dihydroorotate + a quinone = orotate + a quinol. It functions in the pathway pyrimidine metabolism; UMP biosynthesis via de novo pathway; orotate from (S)-dihydroorotate (quinone route): step 1/1. Catalyzes the conversion of dihydroorotate to orotate with quinone as electron acceptor. This Marinomonas sp. (strain MWYL1) protein is Dihydroorotate dehydrogenase (quinone).